Here is a 270-residue protein sequence, read N- to C-terminus: Probable septum site-determining protein MinC (270 aa).

The tract at residues 105-129 (DRRAPSSKAADEAPVQQAEPAAPAA) is disordered. Low complexity predominate over residues 116–129 (EAPVQQAEPAAPAA).

The protein belongs to the MinC family. In terms of assembly, interacts with MinD and FtsZ.

In terms of biological role, cell division inhibitor that blocks the formation of polar Z ring septums. Rapidly oscillates between the poles of the cell to destabilize FtsZ filaments that have formed before they mature into polar Z rings. Prevents FtsZ polymerization. The sequence is that of Probable septum site-determining protein MinC from Burkholderia pseudomallei (strain 1106a).